The following is a 778-amino-acid chain: Jhy protein homolog (778 aa).

Disordered stretches follow at residues 62–271 (DRIR…PKTD), 334–408 (QYES…LDTS), 631–654 (EKGKKHKKRSSSKNTKLKGYQKRD), and 721–746 (IPKPKPSNLTHQASKEQKNPTYAGKE). A compositionally biased stretch (basic and acidic residues) spans 118 to 139 (PIEDKYSDLRYDPNWKSKKEEG). Positions 223 to 234 (SSLSPYVKSSSS) are enriched in low complexity. The segment covering 334 to 344 (QYESTKSSNVP) has biased composition (polar residues). Positions 358–371 (SRRPAKLKIRKQCK) are enriched in basic residues. Positions 375–389 (GLKSSTTEEVTASQG) are enriched in polar residues. Residues 390-402 (NQNNPPRQQQNQN) show a composition bias toward low complexity. Residues 633-650 (GKKHKKRSSSKNTKLKGY) are compositionally biased toward basic residues. Basic and acidic residues predominate over residues 733–746 (ASKEQKNPTYAGKE).

In terms of biological role, required for the normal development of cilia in brain ependymal cells lining the ventricular surfaces. This Homo sapiens (Human) protein is Jhy protein homolog.